A 362-amino-acid chain; its full sequence is Peptide chain release factor 1 (362 aa).

Glutamine 235 is subject to N5-methylglutamine.

This sequence belongs to the prokaryotic/mitochondrial release factor family. Methylated by PrmC. Methylation increases the termination efficiency of RF1.

It is found in the cytoplasm. Functionally, peptide chain release factor 1 directs the termination of translation in response to the peptide chain termination codons UAG and UAA. The polypeptide is Peptide chain release factor 1 (Acinetobacter baumannii (strain AYE)).